The sequence spans 440 residues: Xylose isomerase (440 aa).

Catalysis depends on residues histidine 99 and aspartate 102. The Mg(2+) site is built by glutamate 230, glutamate 266, histidine 269, aspartate 294, aspartate 305, aspartate 307, and aspartate 337.

The protein belongs to the xylose isomerase family. Homotetramer. Mg(2+) is required as a cofactor.

It localises to the cytoplasm. The catalysed reaction is alpha-D-xylose = alpha-D-xylulofuranose. The polypeptide is Xylose isomerase (Halalkalibacterium halodurans (strain ATCC BAA-125 / DSM 18197 / FERM 7344 / JCM 9153 / C-125) (Bacillus halodurans)).